The primary structure comprises 285 residues: Type II secretion system protein C (285 aa).

Residues 1–27 are Cytoplasmic-facing; the sequence is MSKGIKMHNSVMRLTIPNKKIINYAPH. The helical transmembrane segment at 28–46 threads the bilayer; the sequence is IVTSIILFFICQQLAQLTW. Topologically, residues 47–285 are periplasmic; that stretch reads KIILPVNFTD…NDIYLALRDE (239 aa).

The protein belongs to the GSP C family.

It is found in the cell inner membrane. Its function is as follows. Involved in a type II secretion system (T2SS, formerly general secretion pathway, GSP) for the export of proteins. Required for the translocation of pullulanase. The protein is Type II secretion system protein C (pulC) of Klebsiella pneumoniae.